The sequence spans 261 residues: Ribosomal RNA small subunit methyltransferase J (261 aa).

S-adenosyl-L-methionine contacts are provided by residues 109–110 (RD), 125–126 (ER), and D179.

The protein belongs to the methyltransferase superfamily. RsmJ family.

The protein resides in the cytoplasm. It carries out the reaction guanosine(1516) in 16S rRNA + S-adenosyl-L-methionine = N(2)-methylguanosine(1516) in 16S rRNA + S-adenosyl-L-homocysteine + H(+). In terms of biological role, specifically methylates the guanosine in position 1516 of 16S rRNA. The polypeptide is Ribosomal RNA small subunit methyltransferase J (Pseudomonas aeruginosa (strain UCBPP-PA14)).